Consider the following 159-residue polypeptide: Ribosome maturation factor RimP (159 aa).

This sequence belongs to the RimP family.

The protein resides in the cytoplasm. Its function is as follows. Required for maturation of 30S ribosomal subunits. The sequence is that of Ribosome maturation factor RimP from Trichlorobacter lovleyi (strain ATCC BAA-1151 / DSM 17278 / SZ) (Geobacter lovleyi).